The following is a 142-amino-acid chain: Nucleoside diphosphate kinase (142 aa).

ATP contacts are provided by K11, F59, R87, T93, R104, and N114. H117 serves as the catalytic Pros-phosphohistidine intermediate.

The protein belongs to the NDK family. In terms of assembly, homotetramer. Mg(2+) is required as a cofactor.

The protein resides in the cytoplasm. The enzyme catalyses a 2'-deoxyribonucleoside 5'-diphosphate + ATP = a 2'-deoxyribonucleoside 5'-triphosphate + ADP. The catalysed reaction is a ribonucleoside 5'-diphosphate + ATP = a ribonucleoside 5'-triphosphate + ADP. Functionally, major role in the synthesis of nucleoside triphosphates other than ATP. The ATP gamma phosphate is transferred to the NDP beta phosphate via a ping-pong mechanism, using a phosphorylated active-site intermediate. The sequence is that of Nucleoside diphosphate kinase from Wigglesworthia glossinidia brevipalpis.